A 155-amino-acid chain; its full sequence is Ribosomal RNA large subunit methyltransferase H (155 aa).

Residues Leu-72, Gly-103, and 122 to 127 each bind S-adenosyl-L-methionine; that span reads LSALTL.

It belongs to the RNA methyltransferase RlmH family. As to quaternary structure, homodimer.

It localises to the cytoplasm. The catalysed reaction is pseudouridine(1915) in 23S rRNA + S-adenosyl-L-methionine = N(3)-methylpseudouridine(1915) in 23S rRNA + S-adenosyl-L-homocysteine + H(+). Its function is as follows. Specifically methylates the pseudouridine at position 1915 (m3Psi1915) in 23S rRNA. In Salmonella dublin (strain CT_02021853), this protein is Ribosomal RNA large subunit methyltransferase H.